Here is a 122-residue protein sequence, read N- to C-terminus: Large ribosomal subunit protein bL17 (122 aa).

It belongs to the bacterial ribosomal protein bL17 family. As to quaternary structure, part of the 50S ribosomal subunit. Contacts protein L32.

This chain is Large ribosomal subunit protein bL17, found in Neisseria meningitidis serogroup C / serotype 2a (strain ATCC 700532 / DSM 15464 / FAM18).